Here is a 688-residue protein sequence, read N- to C-terminus: Sodium channel and clathrin linker 1 (688 aa).

Residue Ala-2 is modified to N-acetylalanine. Residues 69–673 (ELNGQLKYYQ…SASQQLSVIT (605 aa)) adopt a coiled-coil conformation. Ser-681 carries the post-translational modification Phosphoserine.

Interacts with SCN10A and clathrin. Identified in a complex containing SCN10A, clathrin and SCLT1.

It localises to the cytoplasm. The protein localises to the cytoskeleton. The protein resides in the microtubule organizing center. Its subcellular location is the centrosome. It is found in the centriole. Functionally, adapter protein that links SCN10A to clathrin. Regulates SCN10A channel activity, possibly by promoting channel internalization. This chain is Sodium channel and clathrin linker 1 (SCLT1), found in Homo sapiens (Human).